A 425-amino-acid polypeptide reads, in one-letter code: Septin-7 (425 aa).

One can recognise a Septin-type G domain in the interval 28-297; sequence RGFEFTLMVV…ENYRSRKLAA (270 aa). The tract at residues 38 to 45 is G1 motif; that stretch reads GESGLGKS. GTP-binding positions include 38–45, Thr71, Gly97, 176–184, Gly231, and Arg246; these read GESGLGKS and KADTLTPEE. A G3 motif region spans residues 94-97; sequence DTPG. Residues 175–178 are G4 motif; it reads AKAD. Residues 324-421 adopt a coiled-coil conformation; it reads LAQMEEERRE…SRTLEKNKKK (98 aa).

The protein belongs to the TRAFAC class TrmE-Era-EngA-EngB-Septin-like GTPase superfamily. Septin GTPase family. As to quaternary structure, monomer, and homodimer. Nucleotide binding promotes oligomerization. Can form heterooligomers with other family members and form filaments.

It localises to the cytoplasm. The protein localises to the chromosome. The protein resides in the centromere. Its subcellular location is the kinetochore. It is found in the cytoskeleton. It localises to the spindle. The protein localises to the cleavage furrow. The protein resides in the midbody. Its subcellular location is the cilium axoneme. Filament-forming cytoskeletal GTPase. Required for normal organization of the actin cytoskeleton. Required for normal progress through mitosis. Involved in cytokinesis. Plays a role in ciliogenesis and collective cell movements including convergent extension during gastrulation. Controls cell elongation but not polarization during convergent extension. This Xenopus laevis (African clawed frog) protein is Septin-7.